Here is a 167-residue protein sequence, read N- to C-terminus: UPF0114 protein Tola_1474 (167 aa).

The next 4 helical transmembrane spans lie at 15 to 35 (IMAPIYLGLSLALLALGIKFF), 53 to 73 (LILIILSLIDISLVGGLIVMV), 109 to 129 (VAASIVAISSIHLLKVFMNTE), and 136 to 156 (IKWYLLIHITFVMSAFAMGYL).

It belongs to the UPF0114 family.

Its subcellular location is the cell membrane. This is UPF0114 protein Tola_1474 from Tolumonas auensis (strain DSM 9187 / NBRC 110442 / TA 4).